The primary structure comprises 31 residues: Conotoxin pc6d (31 aa).

3 disulfide bridges follow: Cys2-Cys20, Cys9-Cys25, and Cys19-Cys29.

The protein belongs to the conotoxin O1 superfamily. As to expression, expressed by the venom duct.

It localises to the secreted. This chain is Conotoxin pc6d, found in Conus pictus (Cone snail).